The following is an 80-amino-acid chain: OMEGA-myrmeciitoxin(02)-Mg1a (80 aa).

An N-terminal signal peptide occupies residues 1-30; that stretch reads MKNNYISTCIVYLMAALLLISVISIKECTA. Residues 35–75 form the EGF-like domain; the sequence is YGDPCSDDLKDYCIHGDCFFLKELNQPACRCYTGYYGSRCE. 3 disulfides stabilise this stretch: cysteine 39–cysteine 52, cysteine 47–cysteine 63, and cysteine 65–cysteine 74.

This sequence belongs to the EGF domain peptide family. In terms of tissue distribution, expressed by the venom gland.

Its subcellular location is the secreted. In terms of biological role, ant peptide with probable defensive activity which acts as a potent agonist of the mammalian epidermal growth factor receptor (EGFR) (EC(50)=6.3 nM). Mimics, both structurally and functionally, vertebrate epidermal growth factor (EGF) peptide hormones. In vivo, intraplantar injection in mice causes long-lasting (several days) hypersensitivity of the injected paw to both mechanical and thermal stimuli. Its long-lasting effect is unusual for venom toxins whose effects are usually immediate. One possible explanation is that it would reduce the duration of a nest attack, discourage future attacks, or enhance the actions of subsequent exposure to other pain-inducing venom peptides. This Myrmecia gulosa (Red bulldog ant) protein is OMEGA-myrmeciitoxin(02)-Mg1a.